A 186-amino-acid polypeptide reads, in one-letter code: Ribosome-recycling factor (186 aa).

It belongs to the RRF family.

Its subcellular location is the cytoplasm. Its function is as follows. Responsible for the release of ribosomes from messenger RNA at the termination of protein biosynthesis. May increase the efficiency of translation by recycling ribosomes from one round of translation to another. The chain is Ribosome-recycling factor from Coprothermobacter proteolyticus (strain ATCC 35245 / DSM 5265 / OCM 4 / BT).